The primary structure comprises 607 residues: 2-isopropylmalate synthase (607 aa).

Positions 1-10 (MASFSESLSQ) are enriched in polar residues. Residues 1–40 (MASFSESLSQDPADAYKSAPSITKPMGPPSPGQPQWNPQR) are disordered. One can recognise a Pyruvate carboxyltransferase domain in the interval 75 to 349 (PLWCAVDLRD…DPQIDFSNID (275 aa)). Asp84, His288, His290, and Asn324 together coordinate Mg(2+). Residues 491–607 (PVQPLERIKQ…VSAVNRAMPR (117 aa)) are regulatory domain.

The protein belongs to the alpha-IPM synthase/homocitrate synthase family. LeuA type 2 subfamily. As to quaternary structure, homodimer. It depends on Mg(2+) as a cofactor.

The protein localises to the cytoplasm. The catalysed reaction is 3-methyl-2-oxobutanoate + acetyl-CoA + H2O = (2S)-2-isopropylmalate + CoA + H(+). It functions in the pathway amino-acid biosynthesis; L-leucine biosynthesis; L-leucine from 3-methyl-2-oxobutanoate: step 1/4. In terms of biological role, catalyzes the condensation of the acetyl group of acetyl-CoA with 3-methyl-2-oxobutanoate (2-ketoisovalerate) to form 3-carboxy-3-hydroxy-4-methylpentanoate (2-isopropylmalate). The sequence is that of 2-isopropylmalate synthase from Mycobacterium leprae (strain TN).